Consider the following 280-residue polypeptide: Succinate dehydrogenase [ubiquinone] iron-sulfur subunit, mitochondrial (280 aa).

A mitochondrion-targeting transit peptide spans 1 to 28; the sequence is MAAVVALSLRRRLPATTLGGACLQASRG. The region spanning 40-133 is the 2Fe-2S ferredoxin-type domain; it reads KKFAIYRWDP…VSKIYPLPHM (94 aa). N6-acetyllysine is present on residues lysine 51 and lysine 55. [2Fe-2S] cluster-binding residues include cysteine 93, cysteine 98, cysteine 101, and cysteine 113. Residues 146-218 are interaction with SDHAF1; the sequence is FYAQYKSIEP…PAVLMQAYRW (73 aa). In terms of domain architecture, 4Fe-4S ferredoxin-type spans 176–206; the sequence is EREKLDGLYECILCACCSTSCPSYWWNGDKY. Positions 186, 189, and 192 each coordinate [4Fe-4S] cluster. Cysteine 196 contributes to the [3Fe-4S] cluster binding site. Tryptophan 201 lines the a ubiquinone pocket. [3Fe-4S] cluster contacts are provided by cysteine 243 and cysteine 249. Position 253 (cysteine 253) interacts with [4Fe-4S] cluster.

It belongs to the succinate dehydrogenase/fumarate reductase iron-sulfur protein family. Component of complex II composed of four subunits: the flavoprotein (FP) SDHA, iron-sulfur protein (IP) SDHB, and a cytochrome b560 composed of SDHC and SDHD. Interacts with SDHAF1; the interaction is required for iron-sulfur cluster incorporation into SDHB. As to quaternary structure, (Microbial infection) Interacts with JC virus small t antigen. It depends on [2Fe-2S] cluster as a cofactor. [3Fe-4S] cluster serves as cofactor. Requires [4Fe-4S] cluster as cofactor.

It localises to the mitochondrion inner membrane. It catalyses the reaction a quinone + succinate = fumarate + a quinol. The catalysed reaction is (R)-malate + a quinone = enol-oxaloacetate + a quinol. The enzyme catalyses (S)-malate + a quinone = enol-oxaloacetate + a quinol. Its pathway is carbohydrate metabolism; tricarboxylic acid cycle; fumarate from succinate (eukaryal route): step 1/1. Enol-oxaloacetate inhibits the succinate dehydrogenase activity. Functionally, iron-sulfur protein (IP) subunit of the succinate dehydrogenase complex (mitochondrial respiratory chain complex II), responsible for transferring electrons from succinate to ubiquinone (coenzyme Q). SDH also oxidizes malate to the non-canonical enol form of oxaloacetate, enol-oxaloacetate. Enol-oxaloacetate, which is a potent inhibitor of the succinate dehydrogenase activity, is further isomerized into keto-oxaloacetate. The chain is Succinate dehydrogenase [ubiquinone] iron-sulfur subunit, mitochondrial (SDHB) from Homo sapiens (Human).